A 291-amino-acid polypeptide reads, in one-letter code: AA14 family lytic polysaccharide monooxygenase (291 aa).

Positions 1–17 are cleaved as a signal peptide; it reads MLTTAILFTSLAGSAYA. Residue N141 is glycosylated (N-linked (GlcNAc...) asparagine). Cystine bridges form between C192/C197, C199/C220, and C240/C247.

It belongs to the polysaccharide monooxygenase AA14 family. The cofactor is Cu(2+).

It localises to the secreted. In terms of biological role, lytic polysaccharide monooxygenase (LPMO) that is active against heteroxylan, xyloglucan and cellulose in beta-cellulose and released native oligosaccharides and corresponding C1- and/or C4-oxidized products. May act mainly on heteroxylan with numerous arabinosyl substituents between cellulose fibers rather than on recalcitrant xylan tightly associated with cellulose. Catalysis by LPMOs requires the reduction of the active-site copper from Cu(II) to Cu(I) by a reducing agent and H(2)O(2) or O(2) as a cosubstrate. Shows a branched chain preference, and has synergistic effects with the Penicillium parvum debranching enzyme ABF62C in an enzyme- and ascorbic acid-dependent manner. Also has synergistic effects with the Penicillium parvum GH10 endoxylanase XYN1, and the degree of synergy was greater with step-by-step addition than with simultaneous addition. The protein is AA14 family lytic polysaccharide monooxygenase of Sordaria brevicollis.